The primary structure comprises 445 residues: Exodeoxyribonuclease 7 large subunit (445 aa).

This sequence belongs to the XseA family. As to quaternary structure, heterooligomer composed of large and small subunits.

It localises to the cytoplasm. The enzyme catalyses Exonucleolytic cleavage in either 5'- to 3'- or 3'- to 5'-direction to yield nucleoside 5'-phosphates.. In terms of biological role, bidirectionally degrades single-stranded DNA into large acid-insoluble oligonucleotides, which are then degraded further into small acid-soluble oligonucleotides. The polypeptide is Exodeoxyribonuclease 7 large subunit (Staphylococcus epidermidis (strain ATCC 35984 / DSM 28319 / BCRC 17069 / CCUG 31568 / BM 3577 / RP62A)).